The sequence spans 149 residues: MKILLLEDVKNLGKAGEVCEVKDGYGNNFLIANQKAKLATNEVINKYKAEAKKKAEKEALEKAQKLQMVETLQTITLTIHKKVGANGSLFGAITKEEITERLKEQHASLDLDKKDIELKHPIKSTGIYEIEVKLGSGVVGTFKIDVVAE.

It belongs to the bacterial ribosomal protein bL9 family.

Binds to the 23S rRNA. This is Large ribosomal subunit protein bL9 from Helicobacter pylori (strain P12).